Consider the following 173-residue polypeptide: MPRTQRNDNFIDKTFTVMADIILKILPANQKAKEAFVYYRDGMSAQADGEYAEALDNYYEALKLEEDPNDRSYILYNIGIIHASNGDQEKALEYYNQSVDLNPRMPSALNNIAVIYHYQGEKAREEGREEEAEALYDKAAEYWKQAIRLAPNNYIEAQNWLKVTGRSEMDVFF.

TPR repeat units follow at residues 35 to 68 (AFVY…EEDP), 72 to 105 (SYIL…NPRM), and 120 to 153 (GEKA…APNN).

It belongs to the Ycf3 family.

It is found in the cellular thylakoid membrane. Essential for the assembly of the photosystem I (PSI) complex. May act as a chaperone-like factor to guide the assembly of the PSI subunits. In Rippkaea orientalis (strain PCC 8801 / RF-1) (Cyanothece sp. (strain PCC 8801)), this protein is Photosystem I assembly protein Ycf3.